Here is a 239-residue protein sequence, read N- to C-terminus: MADS-box transcription factor 34 (239 aa).

The 61-residue stretch at 1–61 (MGRGKVVLQR…GRLYQFSSSS (61 aa)) folds into the MADS-box domain. Residues 88-178 (MQNNYQEYVN…KRKLDEIDVE (91 aa)) enclose the K-box domain. A disordered region spans residues 179–208 (AAPPQPPWNGNCSNGHGGGGGVFSSEPPQP).

As to expression, highly expressed in leaves and at low levels in roots and spikelets (rice flower).

The protein localises to the nucleus. Its function is as follows. Probable transcription factor. This is MADS-box transcription factor 34 (MADS34) from Oryza sativa subsp. japonica (Rice).